A 150-amino-acid chain; its full sequence is uncharacterized protein (150 aa).

3 helical membrane-spanning segments follow: residues 48-68 (LFLL…CFLF), 89-109 (VFIF…YLLP), and 123-143 (REVF…IFTL).

The protein to M.pneumoniae MPN_085 central region.

The protein resides in the cell membrane. This is an uncharacterized protein from Mycoplasma pneumoniae (strain ATCC 29342 / M129 / Subtype 1) (Mycoplasmoides pneumoniae).